The sequence spans 202 residues: MSRYRGPRLRVTRRLGELPGLTRKASKKSNPPGQHGQARRKRSEYAIRLEEKQKLRFNYGVSEKQLVRYVKKARAQEGSTGTNLLRLLENRLDNVCFRLGFGGTIPGSRQLVNHGHVTVNGKVLDIAGYQCKSGDVIGIKENKASKKLVEGNIEFPGLANVPPHLDLDKPKLTGKINGKCDREWVALEINELLVVEYYSRKV.

Positions 1–13 are enriched in basic residues; the sequence is MSRYRGPRLRVTR. The tract at residues 1 to 42 is disordered; the sequence is MSRYRGPRLRVTRRLGELPGLTRKASKKSNPPGQHGQARRKR. The 63-residue stretch at 90 to 152 folds into the S4 RNA-binding domain; that stretch reads NRLDNVCFRL…KASKKLVEGN (63 aa).

It belongs to the universal ribosomal protein uS4 family. Part of the 30S ribosomal subunit. Contacts protein S5. The interaction surface between S4 and S5 is involved in control of translational fidelity.

Its function is as follows. One of the primary rRNA binding proteins, it binds directly to 16S rRNA where it nucleates assembly of the body of the 30S subunit. In terms of biological role, with S5 and S12 plays an important role in translational accuracy. This Prochlorococcus marinus (strain AS9601) protein is Small ribosomal subunit protein uS4.